Consider the following 255-residue polypeptide: Sporulation-specific N-acetylmuramoyl-L-alanine amidase (255 aa).

A MurNAc-LAA domain is found at 4 to 172; that stretch reads IFIDPGHGGS…LARGHANGLE (169 aa). Zn(2+) is bound by residues His-10, Glu-24, and His-79. Glu-141 is an active-site residue. Residues 180 to 254 form the SPOR domain; that stretch reads TSSSGLYKVQ…AGFDAIVILE (75 aa). 2 repeat units span residues 184 to 219 and 220 to 255. Residues 184–255 are 2 X 35 AA approximate tandem repeats; it reads GLYKVQIGAF…GFDAIVILES (72 aa).

The protein belongs to the N-acetylmuramoyl-L-alanine amidase 3 family. The cofactor is Zn(2+).

It localises to the secreted. It is found in the cell wall. It catalyses the reaction Hydrolyzes the link between N-acetylmuramoyl residues and L-amino acid residues in certain cell-wall glycopeptides.. With respect to regulation, inhibited by EDTA. Autolysins are involved in some important biological processes such as cell separation, cell-wall turnover, competence for genetic transformation, formation of the flagella - in particular of its basal body - and sporulation. CwlC is able to hydrolyze type A cell walls such as B.subtilis. Its main function is to lyze the mother cell wall peptidoglycan, playing a role during sporulation. This is Sporulation-specific N-acetylmuramoyl-L-alanine amidase (cwlC) from Bacillus subtilis (strain 168).